The sequence spans 674 residues: MPPPAEEFAVDDLDEFESRLDSFLNRFHADDLRRILLPDPDGKLHFPLVIDFAELLEFDPEVAHQLYDYPKDVLELFDAAAQRALDKFDAAARRADKRKAGDEPMEKKFVHVRVNTSGSPLECPEASPSIGKVRVKHRGTLLTLKGTVIRSGGVKMIEGERKYQCRKCKCRFTVHPELEAGNRITLPASCKSKSAKGCGGANFQLIEDSITCHDYQEIKIQENIQLLGVGSIPRSMPIILMDDLVDIVKAGDDVVVTGRLSAKWSPDIKDVRSNLDPMLIANFVRRTNELKSDLDIPVEIINKFEEFWAASRATPLKGRNSILKGICPQIYGLFTVKLAVALTLIGGVQHVDASGTKVRGEPHMLLVGDPGTGKSQFLKFAAKLSNRSVITTGLGSTSAGLTVTAVKDGGEWMLEAGALVLADGGLCCIDEFDSMREHDRTTIHEAMEQQTISIAKAGLVTTLNTRTTVFGATNPKGQYDPNESLSVNTTLSGPLLSRFDIVLVLLDTKNKKWDKIVSSHILAENTEEKKGKTSDPEVMWTLSMLRRYIHYVKQHFKPVLTKEAERVISSYYQRQRQSGTRNAARTTVRMLESLIRLAQAHARLMFRNDVTKLDAIAAILCIESSMTTSAIVDTAGNALHSNFTENPDQECILKCDSIAYLSKNIKYLTDEISN.

The segment at 165–198 (CRKCKCRFTVHPELEAGNRITLPASCKSKSAKGC) adopts a C4-type zinc-finger fold. Residues 318-521 (GRNSILKGIC…KWDKIVSSHI (204 aa)) form the MCM domain. 368-375 (GDPGTGKS) is an ATP binding site. Positions 497 to 500 (SRFD) match the Arginine finger motif.

It belongs to the MCM family.

The protein localises to the nucleus. The enzyme catalyses ATP + H2O = ADP + phosphate + H(+). Functionally, probable DNA helicase that may play a role in DNA repair during meiosis. This chain is Probable DNA helicase MCM9 (MCM9), found in Oryza sativa subsp. indica (Rice).